We begin with the raw amino-acid sequence, 159 residues long: Ribosomal RNA large subunit methyltransferase H (159 aa).

S-adenosyl-L-methionine contacts are provided by residues leucine 76, glycine 107, and 126-131; that span reads LSSLTL.

It belongs to the RNA methyltransferase RlmH family. Homodimer.

The protein resides in the cytoplasm. It carries out the reaction pseudouridine(1915) in 23S rRNA + S-adenosyl-L-methionine = N(3)-methylpseudouridine(1915) in 23S rRNA + S-adenosyl-L-homocysteine + H(+). Functionally, specifically methylates the pseudouridine at position 1915 (m3Psi1915) in 23S rRNA. The chain is Ribosomal RNA large subunit methyltransferase H from Cupriavidus pinatubonensis (strain JMP 134 / LMG 1197) (Cupriavidus necator (strain JMP 134)).